Reading from the N-terminus, the 166-residue chain is UPF0561 protein C2orf68 homolog (166 aa).

Positions 32-49 are enriched in basic and acidic residues; that stretch reads NQLDRDDYDKKVKQAAKE. The interval 32–107 is disordered; sequence NQLDRDDYDK…SELEPPGRQL (76 aa). Over residues 91–101 the composition is skewed to low complexity; it reads ESSSSGSSELE.

It belongs to the UPF0561 family.

In Mus musculus (Mouse), this protein is UPF0561 protein C2orf68 homolog.